The following is a 156-amino-acid chain: MKIQLVAVGTRMPDWVETGFKEYQRRFPRDMALELIEIPAGKRGKNADIARILQKEGELMLAAIPKGNHIVSLDLPGKNLKTPELAQQMNKWLLDGRDVSLLIGGPEGLSPDCKKAAAQSWCLSALTLPHPLVRVIVAESLYRGWSINNNHPYHRE.

S-adenosyl-L-methionine-binding positions include Leu-73, Gly-104, and 123–128; that span reads LSALTL.

The protein belongs to the RNA methyltransferase RlmH family. As to quaternary structure, homodimer.

Its subcellular location is the cytoplasm. It catalyses the reaction pseudouridine(1915) in 23S rRNA + S-adenosyl-L-methionine = N(3)-methylpseudouridine(1915) in 23S rRNA + S-adenosyl-L-homocysteine + H(+). Specifically methylates the pseudouridine at position 1915 (m3Psi1915) in 23S rRNA. The polypeptide is Ribosomal RNA large subunit methyltransferase H (Shewanella piezotolerans (strain WP3 / JCM 13877)).